Reading from the N-terminus, the 370-residue chain is 3-dehydroquinate synthase (370 aa).

NAD(+) contacts are provided by residues 112–116 (GVIGD), 136–137 (TT), K149, K158, and 176–179 (TLAT). 3 residues coordinate Zn(2+): E191, H254, and H276.

This sequence belongs to the sugar phosphate cyclases superfamily. Dehydroquinate synthase family. It depends on Co(2+) as a cofactor. Zn(2+) is required as a cofactor. Requires NAD(+) as cofactor.

It localises to the cytoplasm. It carries out the reaction 7-phospho-2-dehydro-3-deoxy-D-arabino-heptonate = 3-dehydroquinate + phosphate. It participates in metabolic intermediate biosynthesis; chorismate biosynthesis; chorismate from D-erythrose 4-phosphate and phosphoenolpyruvate: step 2/7. Functionally, catalyzes the conversion of 3-deoxy-D-arabino-heptulosonate 7-phosphate (DAHP) to dehydroquinate (DHQ). This is 3-dehydroquinate synthase from Xylella fastidiosa (strain M12).